A 344-amino-acid chain; its full sequence is Glyceraldehyde-3-phosphate dehydrogenase (344 aa).

NAD(+) is bound by residues 11-12 (TI) and G110. 139–141 (SCN) contributes to the D-glyceraldehyde 3-phosphate binding site. C140 (nucleophile) is an active-site residue. R169 contacts NAD(+). Position 195–196 (195–196 (HG)) interacts with D-glyceraldehyde 3-phosphate. Q302 contacts NAD(+).

The protein belongs to the glyceraldehyde-3-phosphate dehydrogenase family. Homotetramer.

The protein resides in the cytoplasm. The catalysed reaction is D-glyceraldehyde 3-phosphate + phosphate + NADP(+) = (2R)-3-phospho-glyceroyl phosphate + NADPH + H(+). The enzyme catalyses D-glyceraldehyde 3-phosphate + phosphate + NAD(+) = (2R)-3-phospho-glyceroyl phosphate + NADH + H(+). The protein operates within carbohydrate degradation; glycolysis; pyruvate from D-glyceraldehyde 3-phosphate: step 1/5. The sequence is that of Glyceraldehyde-3-phosphate dehydrogenase from Pyrobaculum islandicum (strain DSM 4184 / JCM 9189 / GEO3).